The sequence spans 685 residues: Beta-taxilin (685 aa).

The interval 1–135 (MEINHPDQLS…KEPVSNKEQK (135 aa)) is disordered. Residues 18–28 (GDSSSLNQNGP) show a composition bias toward polar residues. 2 stretches are compositionally biased toward basic and acidic residues: residues 47–67 (GSLHPEKGAHDVAEELSRQLE) and 80–90 (RGKESTSETKE). Positions 98-113 (PDNEDVDYEETTEEID) are enriched in acidic residues. Coiled-coil stretches lie at residues 138–354 (KKIL…VLKE) and 381–470 (NEVF…SEKE). Over residues 465 to 478 (KMSEKEDQVQRTSE) the composition is skewed to basic and acidic residues. Disordered stretches follow at residues 465 to 497 (KMSEKEDQVQRTSEEEPEPSVSENEEVDAEEAN) and 517 to 685 (EFTP…NGVD). 3 positions are modified to phosphoserine: serine 477, serine 484, and serine 486. Acidic residues predominate over residues 479 to 495 (EEPEPSVSENEEVDAEE). Residues 575-591 (CEATPAPTASCTPAEAE) show a composition bias toward low complexity. Positions 612-627 (ANTSGQAPLSPAQGSL) are enriched in polar residues.

The protein belongs to the taxilin family. As to quaternary structure, binds to the C-terminal coiled coil region of syntaxin family members STX1A, STX3A and STX4A. Has a preference for STX1A. As to expression, specifically expressed in skeletal muscle.

Functionally, promotes motor nerve regeneration. May be involved in intracellular vesicle traffic. In Mus musculus (Mouse), this protein is Beta-taxilin (Txlnb).